Consider the following 66-residue polypeptide: Large ribosomal subunit protein bL35 (66 aa).

The protein belongs to the bacterial ribosomal protein bL35 family.

The protein is Large ribosomal subunit protein bL35 of Methylobacterium nodulans (strain LMG 21967 / CNCM I-2342 / ORS 2060).